Reading from the N-terminus, the 354-residue chain is Arginase-2, mitochondrial (354 aa).

A mitochondrion-targeting transit peptide spans 1–22 (MSYGSCVSRLLRTRVQSVLKKS). Positions 120, 143, 145, and 147 each coordinate Mn(2+). Substrate-binding positions include 145-149 (HADIN), 156-158 (SGN), and aspartate 202. Residues aspartate 251 and aspartate 253 each contribute to the Mn(2+) site. Residues threonine 265 and glutamate 296 each contribute to the substrate site. The disordered stretch occupies residues 330 to 354 (GHTVYEQLPPPSSPHESENAERVRI). Residues 344-354 (HESENAERVRI) are compositionally biased toward basic and acidic residues.

The protein belongs to the arginase family. As to quaternary structure, homotrimer. Requires Mn(2+) as cofactor.

Its subcellular location is the mitochondrion. It carries out the reaction L-arginine + H2O = urea + L-ornithine. It functions in the pathway nitrogen metabolism; urea cycle; L-ornithine and urea from L-arginine: step 1/1. Its function is as follows. May play a role in the regulation of extra-urea cycle arginine metabolism and also in down-regulation of nitric oxide synthesis. Extrahepatic arginase functions to regulate L-arginine bioavailability to nitric oxid synthase (NOS). Arginine metabolism is a critical regulator of innate and adaptive immune responses. Seems to be involved in negative regulation of the survival capacity of activated T cells. May suppress inflammation-related signaling in asthmatic airway epithelium. May play a role in promoting prenatal immune suppression. Regulates RPS6KB1 signaling, which promotes endothelial cell senescence and inflammation and implicates NOS3/eNOS dysfunction. Can inhibit endothelial autophagy independently of its enzymatic activity implicating mTORC2 signaling. Involved in vascular smooth muscle cell senescence and apoptosis independently of its enzymatic activity. The sequence is that of Arginase-2, mitochondrial (ARG2) from Oryctolagus cuniculus (Rabbit).